Consider the following 363-residue polypeptide: 3-isopropylmalate dehydrogenase (363 aa).

78–91 (GPKWEHLPPAEQPE) lines the NAD(+) pocket. The substrate site is built by Arg-99, Arg-109, Arg-138, and Asp-227. Residues Asp-227, Asp-251, and Asp-255 each contribute to the Mg(2+) site. 285–297 (GSAPDIAGKGIAN) provides a ligand contact to NAD(+).

The protein belongs to the isocitrate and isopropylmalate dehydrogenases family. LeuB type 1 subfamily. In terms of assembly, homodimer. It depends on Mg(2+) as a cofactor. The cofactor is Mn(2+).

The protein resides in the cytoplasm. It carries out the reaction (2R,3S)-3-isopropylmalate + NAD(+) = 4-methyl-2-oxopentanoate + CO2 + NADH. It functions in the pathway amino-acid biosynthesis; L-leucine biosynthesis; L-leucine from 3-methyl-2-oxobutanoate: step 3/4. Its function is as follows. Catalyzes the oxidation of 3-carboxy-2-hydroxy-4-methylpentanoate (3-isopropylmalate) to 3-carboxy-4-methyl-2-oxopentanoate. The product decarboxylates to 4-methyl-2 oxopentanoate. This Photorhabdus laumondii subsp. laumondii (strain DSM 15139 / CIP 105565 / TT01) (Photorhabdus luminescens subsp. laumondii) protein is 3-isopropylmalate dehydrogenase.